The sequence spans 512 residues: Histidine ammonia-lyase (512 aa).

Positions 146–148 (ASG) form a cross-link, 5-imidazolinone (Ala-Gly). The residue at position 147 (S147) is a 2,3-didehydroalanine (Ser).

This sequence belongs to the PAL/histidase family. Contains an active site 4-methylidene-imidazol-5-one (MIO), which is formed autocatalytically by cyclization and dehydration of residues Ala-Ser-Gly.

It is found in the cytoplasm. It carries out the reaction L-histidine = trans-urocanate + NH4(+). It functions in the pathway amino-acid degradation; L-histidine degradation into L-glutamate; N-formimidoyl-L-glutamate from L-histidine: step 1/3. This chain is Histidine ammonia-lyase, found in Paracidovorax citrulli (strain AAC00-1) (Acidovorax citrulli).